A 178-amino-acid polypeptide reads, in one-letter code: Large ribosomal subunit protein bL25 (178 aa).

It belongs to the bacterial ribosomal protein bL25 family. CTC subfamily. Part of the 50S ribosomal subunit; part of the 5S rRNA/L5/L18/L25 subcomplex. Contacts the 5S rRNA. Binds to the 5S rRNA independently of L5 and L18.

In terms of biological role, this is one of the proteins that binds to the 5S RNA in the ribosome where it forms part of the central protuberance. This chain is Large ribosomal subunit protein bL25, found in Campylobacter jejuni subsp. jejuni serotype O:6 (strain 81116 / NCTC 11828).